The sequence spans 266 residues: GTP cyclohydrolase III (266 aa).

Belongs to the archaeal-type GTP cyclohydrolase family.

The enzyme catalyses GTP + 3 H2O = 2-amino-5-formylamino-6-(5-phospho-D-ribosylamino)pyrimidin-4(3H)-one + 2 phosphate + 2 H(+). Its function is as follows. Catalyzes the formation of 2-amino-5-formylamino-6-ribofuranosylamino-4(3H)-pyrimidinone ribonucleotide monophosphate and inorganic phosphate from GTP. Also has an independent pyrophosphate phosphohydrolase activity. This is GTP cyclohydrolase III from Methanococcus maripaludis (strain DSM 14266 / JCM 13030 / NBRC 101832 / S2 / LL).